The chain runs to 514 residues: Monocarboxylate transporter 10 (514 aa).

A disordered region spans residues methionine 1–proline 64. Over methionine 1 to glutamate 65 the chain is Cytoplasmic. Residues glycine 66 to isoleucine 86 traverse the membrane as a helical segment. Residues glutamine 87–alanine 113 lie on the Extracellular side of the membrane. The chain crosses the membrane as a helical span at residues alanine 114–phenylalanine 134. The Cytoplasmic portion of the chain corresponds to threonine 135–threonine 143. Residues alanine 144–isoleucine 164 form a helical membrane-spanning segment. The Extracellular portion of the chain corresponds to glutamate 165–threonine 170. A helical transmembrane segment spans residues tyrosine 171 to glycine 191. The Cytoplasmic segment spans residues histidine 192–glycine 199. The chain crosses the membrane as a helical span at residues leucine 200 to leucine 220. Topologically, residues glycine 221–valine 227 are extracellular. A helical membrane pass occupies residues glycine 228–phenylalanine 248. Residues threonine 249–threonine 290 lie on the Cytoplasmic side of the membrane. The residue at position 262 (serine 262) is a Phosphoserine. Residues alanine 291–valine 311 traverse the membrane as a helical segment. The Extracellular portion of the chain corresponds to histidine 312–glutamate 328. Residues valine 329 to alanine 349 traverse the membrane as a helical segment. Position 350 (aspartate 350) is a topological domain, cytoplasmic. Residues tyrosine 351–threonine 371 form a helical membrane-spanning segment. At serine 372–aspartate 395 the chain is on the extracellular side. The chain crosses the membrane as a helical span at residues glycine 396–serine 416. Residues glutamine 417–alanine 418 are Cytoplasmic-facing. A helical membrane pass occupies residues isoleucine 419 to leucine 439. The Extracellular segment spans residues leucine 440–alanine 450. A helical membrane pass occupies residues phenylalanine 451 to isoleucine 471. At histidine 472 to isoleucine 514 the chain is on the cytoplasmic side. Phosphoserine occurs at positions 497, 500, 502, and 503.

It belongs to the major facilitator superfamily. Monocarboxylate porter (TC 2.A.1.13) family. Not N-glycosylated. In terms of tissue distribution, strongly expressed in intestine, placenta and liver. In small intestine is detected in the basolateral membrane (at protein level).

It localises to the cell membrane. It is found in the basolateral cell membrane. It catalyses the reaction L-tryptophan(in) = L-tryptophan(out). The catalysed reaction is L-tyrosine(in) = L-tyrosine(out). The enzyme catalyses L-phenylalanine(in) = L-phenylalanine(out). It carries out the reaction 3,3',5-triiodo-L-thyronine(out) = 3,3',5-triiodo-L-thyronine(in). It catalyses the reaction L-thyroxine(out) = L-thyroxine(in). In terms of biological role, sodium- and proton-independent thyroid hormones and aromatic acids transporter. Mediates both uptake and efflux of 3,5,3'-triiodothyronine (T3) and 3,5,3',5'-tetraiodothyronine (T4) with high affinity, suggesting a role in the homeostasis of thyroid hormone levels. Responsible for low affinity bidirectional transport of the aromatic amino acids, such as phenylalanine, tyrosine, tryptophan and L-3,4-dihydroxyphenylalanine (L-dopa). Plays an important role in homeostasis of aromatic amino acids. In Rattus norvegicus (Rat), this protein is Monocarboxylate transporter 10 (Slc16a10).